A 453-amino-acid chain; its full sequence is CCA-adding enzyme (453 aa).

Residues Ser53 and Lys56 each coordinate ATP. The CTP site is built by Ser53 and Lys56. 3 residues coordinate Mg(2+): Asp65, Asp67, and Asp119. Residues His142, Lys161, and Tyr170 each contribute to the ATP site. CTP-binding residues include His142, Lys161, and Tyr170.

Belongs to the tRNA nucleotidyltransferase/poly(A) polymerase family. Archaeal CCA-adding enzyme subfamily. Homodimer. Mg(2+) is required as a cofactor.

It catalyses the reaction a tRNA precursor + 2 CTP + ATP = a tRNA with a 3' CCA end + 3 diphosphate. The enzyme catalyses a tRNA with a 3' CCA end + 2 CTP + ATP = a tRNA with a 3' CCACCA end + 3 diphosphate. Its function is as follows. Catalyzes the addition and repair of the essential 3'-terminal CCA sequence in tRNAs without using a nucleic acid template. Adds these three nucleotides in the order of C, C, and A to the tRNA nucleotide-73, using CTP and ATP as substrates and producing inorganic pyrophosphate. tRNA 3'-terminal CCA addition is required both for tRNA processing and repair. Also involved in tRNA surveillance by mediating tandem CCA addition to generate a CCACCA at the 3' terminus of unstable tRNAs. While stable tRNAs receive only 3'-terminal CCA, unstable tRNAs are marked with CCACCA and rapidly degraded. In Pyrococcus furiosus (strain ATCC 43587 / DSM 3638 / JCM 8422 / Vc1), this protein is CCA-adding enzyme.